Here is a 417-residue protein sequence, read N- to C-terminus: MENPQIEMGAFKANGPQLQNGGLRSSMVQSWNLQRFVESALRSIRIVIFTSKLNLLLPFGPASIILHYTTSRHGLVFLFSMLGITPLAERLGYATEQLAIYTGPTVGGLLNATFGNATEMIIAIYALKNGMIRVVQQSLLGSILSNMLLVMGCAFFAGGIVHRNKDQVFSKATAVVNSGLLLMAVMGLMFPAVLHFTHSEVRQGASEVSLSRFSSCIMLVAYASYLYFQLSGRNNAYSPIGSEEMPNEDAAEEDEESEIGMWESIAWLAMLTLWVSILSEYLVNAIEGASDSLNLPVAFISVILLPIVGNAAEHASAIMFAMKDKLDITLGVAIGSSTQISMFVIPFCVVIGWMMGQKMDLNFQLFETATLFITVLVVAFMLQDGVANYLKGLMLILCYLIVAASFFVHVDPQSSDD.

Residues 1–45 are Cytoplasmic-facing; the sequence is MENPQIEMGAFKANGPQLQNGGLRSSMVQSWNLQRFVESALRSIR. The helical transmembrane segment at 46 to 66 threads the bilayer; it reads IVIFTSKLNLLLPFGPASIIL. Residues 67–73 lie on the Extracellular side of the membrane; that stretch reads HYTTSRH. A helical transmembrane segment spans residues 74–94; it reads GLVFLFSMLGITPLAERLGYA. At 95–105 the chain is on the cytoplasmic side; it reads TEQLAIYTGPT. The helical transmembrane segment at 106-126 threads the bilayer; that stretch reads VGGLLNATFGNATEMIIAIYA. The tract at residues 115–150 is cation selection; sequence GNATEMIIAIYALKNGMIRVVQQSLLGSILSNMLLV. The Extracellular portion of the chain corresponds to 127 to 140; the sequence is LKNGMIRVVQQSLL. The helical transmembrane segment at 141–161 threads the bilayer; that stretch reads GSILSNMLLVMGCAFFAGGIV. Topologically, residues 162-173 are cytoplasmic; the sequence is HRNKDQVFSKAT. A helical membrane pass occupies residues 174 to 194; that stretch reads AVVNSGLLLMAVMGLMFPAVL. Residues 195–207 are Extracellular-facing; sequence HFTHSEVRQGASE. Residues 208-230 traverse the membrane as a helical segment; that stretch reads VSLSRFSSCIMLVAYASYLYFQL. At 231–258 the chain is on the cytoplasmic side; it reads SGRNNAYSPIGSEEMPNEDAAEEDEESE. Residues 259–279 form a helical membrane-spanning segment; that stretch reads IGMWESIAWLAMLTLWVSILS. Residues 280–291 are Extracellular-facing; the sequence is EYLVNAIEGASD. A helical membrane pass occupies residues 292–312; that stretch reads SLNLPVAFISVILLPIVGNAA. The interval 309–344 is cation selection; the sequence is GNAAEHASAIMFAMKDKLDITLGVAIGSSTQISMFV. Residues 313 to 330 lie on the Cytoplasmic side of the membrane; the sequence is EHASAIMFAMKDKLDITL. Residues 331 to 351 traverse the membrane as a helical segment; sequence GVAIGSSTQISMFVIPFCVVI. Residues 352–360 lie on the Extracellular side of the membrane; sequence GWMMGQKMD. The helical transmembrane segment at 361-381 threads the bilayer; it reads LNFQLFETATLFITVLVVAFM. Residues 382–389 are Cytoplasmic-facing; that stretch reads LQDGVANY. Residues 390–410 form a helical membrane-spanning segment; that stretch reads LKGLMLILCYLIVAASFFVHV. The Extracellular portion of the chain corresponds to 411–417; that stretch reads DPQSSDD.

This sequence belongs to the Ca(2+):cation antiporter (CaCA) (TC 2.A.19) family. Cation/proton exchanger (CAX) subfamily. As to expression, ubiquitous.

Its subcellular location is the vacuole membrane. In terms of biological role, vacuolar cation/proton exchanger (CAX). Translocates Ca(2+) and other metal ions into vacuoles using the proton gradient formed by H(+)-ATPase and H(+)-pyrophosphatase. The sequence is that of Vacuolar cation/proton exchanger 3 (CAX3) from Oryza sativa subsp. japonica (Rice).